Consider the following 49-residue polypeptide: Photosystem I reaction center subunit IX (49 aa).

A helical transmembrane segment spans residues 14 to 34 (FISTAPVAATIWLTITAGILI).

This sequence belongs to the PsaJ family.

It is found in the cellular thylakoid membrane. Functionally, may help in the organization of the PsaE and PsaF subunits. This Nostoc punctiforme (strain ATCC 29133 / PCC 73102) protein is Photosystem I reaction center subunit IX.